The following is a 180-amino-acid chain: Cytochrome b6-f complex iron-sulfur subunit 2 (180 aa).

A helical membrane pass occupies residues L21–I43. Residues V66–V162 enclose the Rieske domain. Residues C108, H110, C126, and H129 each contribute to the [2Fe-2S] cluster site. An intrachain disulfide couples C113 to C128.

The protein belongs to the Rieske iron-sulfur protein family. The 4 large subunits of the cytochrome b6-f complex are cytochrome b6, subunit IV (17 kDa polypeptide, PetD), cytochrome f and the Rieske protein, while the 4 small subunits are PetG, PetL, PetM and PetN. The complex functions as a dimer. Requires [2Fe-2S] cluster as cofactor.

The protein resides in the cellular thylakoid membrane. It carries out the reaction 2 oxidized [plastocyanin] + a plastoquinol + 2 H(+)(in) = 2 reduced [plastocyanin] + a plastoquinone + 4 H(+)(out). Component of the cytochrome b6-f complex, which mediates electron transfer between photosystem II (PSII) and photosystem I (PSI), cyclic electron flow around PSI, and state transitions. The sequence is that of Cytochrome b6-f complex iron-sulfur subunit 2 from Synechocystis sp. (strain ATCC 27184 / PCC 6803 / Kazusa).